We begin with the raw amino-acid sequence, 116 residues long: RNA guanine-N7 methyltransferase activating subunit (116 aa).

Residues 1–55 (MAEALGAQELYEKMFEQRFTANDKEYQEYLKREQDQPPIVEDWKMGNQRNTDRYR) are interaction with RNMT. A disordered region spans residues 31 to 116 (KREQDQPPIV…SNQRFHSDRY (86 aa)). The RNMT-activating domain motif lies at 36–42 (QPPIVED). The segment at 56 to 116 (DNRHHRGWDG…SNQRFHSDRY (61 aa)) is RNA-binding. The span at 67–78 (QNWSSNSYNQSY) shows a compositional bias: low complexity. Positions 97–110 (YQQGHYTHNPSNQR) are enriched in polar residues.

The protein belongs to the RAM family.

It localises to the nucleus. Its function is as follows. Regulatory subunit of the mRNA-capping methyltransferase RNMT:RAMAC complex that methylates the N7 position of the added guanosine to the 5'-cap structure of mRNAs. Promotes the recruitment of the methyl donor, S-adenosyl-L-methionine, to RNMT. Regulates RNMT expression by a post-transcriptional stabilizing mechanism. Binds RNA. The chain is RNA guanine-N7 methyltransferase activating subunit (ramac) from Xenopus tropicalis (Western clawed frog).